A 174-amino-acid chain; its full sequence is Large ribosomal subunit protein uL10 (174 aa).

The protein belongs to the universal ribosomal protein uL10 family. In terms of assembly, part of the ribosomal stalk of the 50S ribosomal subunit. The N-terminus interacts with L11 and the large rRNA to form the base of the stalk. The C-terminus forms an elongated spine to which L12 dimers bind in a sequential fashion forming a multimeric L10(L12)X complex.

Functionally, forms part of the ribosomal stalk, playing a central role in the interaction of the ribosome with GTP-bound translation factors. This chain is Large ribosomal subunit protein uL10, found in Acidiphilium cryptum (strain JF-5).